Consider the following 714-residue polypeptide: Glutamine-dependent NAD(+) synthetase (714 aa).

Residues 5–275 (ITLATCNLNQ…VEVVTATVDL (271 aa)) form the CN hydrolase domain. The Proton acceptor; for glutaminase activity role is filled by E45. Residue K114 is the For glutaminase activity of the active site. Residue C175 is the Nucleophile; for glutaminase activity of the active site. The ligase stretch occupies residues 329–714 (YHSPEEEIAL…GSTLDIMSID (386 aa)). 359-366 (PLSGGIDS) provides a ligand contact to ATP. The active site involves S361.

The protein in the C-terminal section; belongs to the NAD synthetase family.

It carries out the reaction deamido-NAD(+) + L-glutamine + ATP + H2O = L-glutamate + AMP + diphosphate + NAD(+) + H(+). The protein operates within cofactor biosynthesis; NAD(+) biosynthesis; NAD(+) from deamido-NAD(+) (L-Gln route): step 1/1. The chain is Glutamine-dependent NAD(+) synthetase (QNS1) from Saccharomyces cerevisiae (strain ATCC 204508 / S288c) (Baker's yeast).